The following is a 225-amino-acid chain: NAD(P)H-quinone oxidoreductase subunit K, chloroplastic (225 aa).

Cys-43, Cys-44, Cys-108, and Cys-139 together coordinate [4Fe-4S] cluster.

Belongs to the complex I 20 kDa subunit family. NDH is composed of at least 16 different subunits, 5 of which are encoded in the nucleus. The cofactor is [4Fe-4S] cluster.

Its subcellular location is the plastid. The protein localises to the chloroplast thylakoid membrane. It catalyses the reaction a plastoquinone + NADH + (n+1) H(+)(in) = a plastoquinol + NAD(+) + n H(+)(out). It carries out the reaction a plastoquinone + NADPH + (n+1) H(+)(in) = a plastoquinol + NADP(+) + n H(+)(out). In terms of biological role, NDH shuttles electrons from NAD(P)H:plastoquinone, via FMN and iron-sulfur (Fe-S) centers, to quinones in the photosynthetic chain and possibly in a chloroplast respiratory chain. The immediate electron acceptor for the enzyme in this species is believed to be plastoquinone. Couples the redox reaction to proton translocation, and thus conserves the redox energy in a proton gradient. This chain is NAD(P)H-quinone oxidoreductase subunit K, chloroplastic, found in Barbarea verna (Land cress).